Here is a 109-residue protein sequence, read N- to C-terminus: Putative double-stranded DNA mimic protein YciU (109 aa).

Belongs to the putative dsDNA mimic protein family.

Functionally, may act as a double-stranded DNA (dsDNA) mimic. Probably regulates the activity of a dsDNA-binding protein. The protein is Putative double-stranded DNA mimic protein YciU of Salmonella paratyphi B (strain ATCC BAA-1250 / SPB7).